We begin with the raw amino-acid sequence, 594 residues long: CTP synthase (594 aa).

The amidoligase domain stretch occupies residues 1-272; sequence MARPKNVKYV…DLRVLKKLGL (272 aa). A CTP-binding site is contributed by Ser18. Ser18 lines the UTP pocket. Residue 19 to 24 coordinates ATP; that stretch reads SLGKGI. Tyr59 is a binding site for L-glutamine. Asp76 serves as a coordination point for ATP. Residues Asp76 and Glu146 each coordinate Mg(2+). Residues 153–155, 193–198, and Lys229 each bind CTP; these read DIE and KTKPTQ. UTP contacts are provided by residues 193–198 and Lys229; that span reads KTKPTQ. In terms of domain architecture, Glutamine amidotransferase type-1 spans 299 to 543; the sequence is TIVVCGKYTE…VGAAKSYAAV (245 aa). Gly363 lines the L-glutamine pocket. Catalysis depends on Cys390, which acts as the Nucleophile; for glutamine hydrolysis. L-glutamine contacts are provided by residues 391–394, Glu414, and Arg471; that span reads LGMQ. Catalysis depends on residues His516 and Glu518. The segment covering 562-571 has biased composition (low complexity); that stretch reads AEAYAAYSEE. The interval 562 to 594 is disordered; it reads AEAYAAYSEESSAESKSFFPDNGGHDEERDSGQ. Residues 584–594 are compositionally biased toward basic and acidic residues; sequence GGHDEERDSGQ.

It belongs to the CTP synthase family. As to quaternary structure, homotetramer.

It catalyses the reaction UTP + L-glutamine + ATP + H2O = CTP + L-glutamate + ADP + phosphate + 2 H(+). The enzyme catalyses L-glutamine + H2O = L-glutamate + NH4(+). The catalysed reaction is UTP + NH4(+) + ATP = CTP + ADP + phosphate + 2 H(+). It participates in pyrimidine metabolism; CTP biosynthesis via de novo pathway; CTP from UDP: step 2/2. Its activity is regulated as follows. Allosterically activated by GTP, when glutamine is the substrate; GTP has no effect on the reaction when ammonia is the substrate. The allosteric effector GTP functions by stabilizing the protein conformation that binds the tetrahedral intermediate(s) formed during glutamine hydrolysis. Inhibited by the product CTP, via allosteric rather than competitive inhibition. Catalyzes the ATP-dependent amination of UTP to CTP with either L-glutamine or ammonia as the source of nitrogen. Regulates intracellular CTP levels through interactions with the four ribonucleotide triphosphates. This Chlorobium phaeovibrioides (strain DSM 265 / 1930) (Prosthecochloris vibrioformis (strain DSM 265)) protein is CTP synthase.